A 286-amino-acid polypeptide reads, in one-letter code: Elongation factor Ts (286 aa).

The segment at Thr79–Val82 is involved in Mg(2+) ion dislocation from EF-Tu.

It belongs to the EF-Ts family.

The protein localises to the cytoplasm. Functionally, associates with the EF-Tu.GDP complex and induces the exchange of GDP to GTP. It remains bound to the aminoacyl-tRNA.EF-Tu.GTP complex up to the GTP hydrolysis stage on the ribosome. This chain is Elongation factor Ts, found in Wolbachia pipientis wMel.